Consider the following 135-residue polypeptide: Aspartate 1-decarboxylase (135 aa).

The active-site Schiff-base intermediate with substrate; via pyruvic acid is Ser25. Ser25 is subject to Pyruvic acid (Ser). Thr57 is a binding site for substrate. Catalysis depends on Tyr58, which acts as the Proton donor. Substrate is bound at residue 73–75 (GSA).

This sequence belongs to the PanD family. Heterooctamer of four alpha and four beta subunits. Requires pyruvate as cofactor. In terms of processing, is synthesized initially as an inactive proenzyme, which is activated by self-cleavage at a specific serine bond to produce a beta-subunit with a hydroxyl group at its C-terminus and an alpha-subunit with a pyruvoyl group at its N-terminus.

The protein localises to the cytoplasm. It carries out the reaction L-aspartate + H(+) = beta-alanine + CO2. It functions in the pathway cofactor biosynthesis; (R)-pantothenate biosynthesis; beta-alanine from L-aspartate: step 1/1. Catalyzes the pyruvoyl-dependent decarboxylation of aspartate to produce beta-alanine. This Albidiferax ferrireducens (strain ATCC BAA-621 / DSM 15236 / T118) (Rhodoferax ferrireducens) protein is Aspartate 1-decarboxylase.